A 236-amino-acid polypeptide reads, in one-letter code: WUSCHEL-related homeobox 4 (236 aa).

Positions 88–152 form a DNA-binding region, homeobox; WUS-type; that stretch reads AGTTRWNPSA…NHKARERQKQ (65 aa). The segment at 169–188 is disordered; sequence PATANETKEAPEKKEKDVED. The segment covering 174–187 has biased composition (basic and acidic residues); the sequence is ETKEAPEKKEKDVE.

The protein belongs to the WUS homeobox family.

Its subcellular location is the nucleus. Functionally, transcription factor which may be involved in developmental processes. This Oryza sativa subsp. indica (Rice) protein is WUSCHEL-related homeobox 4 (WOX4).